The following is a 252-amino-acid chain: MSKSVPLQRIVLVAALMATGGLAGGCSSIDRLAAIGERPALTPIENPTTQPGYKPVQMPMPKPEVASYNANSLWRNGSRAFFKDQRAAKVGDILTVTVNFTDKANIANETQRSRTSKEDSGITDFIGSKTITTPATAVLPGRILTTDSTSSSDGKGSVQRQEALQTNVAAVVTQVLPNGNLVVEGKQEIRVNFEIRELIVAGIVRPEDIQSDNTIDSSKIAQARIAYGGRGQITDVQQPRYGQQVMDVLLPF.

Positions 1–25 (MSKSVPLQRIVLVAALMATGGLAGG) are cleaved as a signal peptide. A lipid anchor (N-palmitoyl cysteine) is attached at C26. C26 carries the S-diacylglycerol cysteine lipid modification.

Belongs to the FlgH family. The basal body constitutes a major portion of the flagellar organelle and consists of four rings (L,P,S, and M) mounted on a central rod.

The protein resides in the cell outer membrane. The protein localises to the bacterial flagellum basal body. Its function is as follows. Assembles around the rod to form the L-ring and probably protects the motor/basal body from shearing forces during rotation. In Rhodopseudomonas palustris (strain ATCC BAA-98 / CGA009), this protein is Flagellar L-ring protein.